We begin with the raw amino-acid sequence, 333 residues long: Ribosomal RNA small subunit methyltransferase H (333 aa).

S-adenosyl-L-methionine contacts are provided by residues G42–H44, D62, F86, D105, and Q112.

It belongs to the methyltransferase superfamily. RsmH family.

Its subcellular location is the cytoplasm. It carries out the reaction cytidine(1402) in 16S rRNA + S-adenosyl-L-methionine = N(4)-methylcytidine(1402) in 16S rRNA + S-adenosyl-L-homocysteine + H(+). Functionally, specifically methylates the N4 position of cytidine in position 1402 (C1402) of 16S rRNA. The polypeptide is Ribosomal RNA small subunit methyltransferase H (Cupriavidus necator (strain ATCC 17699 / DSM 428 / KCTC 22496 / NCIMB 10442 / H16 / Stanier 337) (Ralstonia eutropha)).